Here is a 271-residue protein sequence, read N- to C-terminus: MNRTVFFVSESTGITAETLGHSLLSQFDTIDFEQVYMPYINTDLRAKALTQRMQEAADRDGVRPIVFATMLNNEIREILESGNCYYVELFEGFVEPLSRELGVPPSRKSGRSHAITKPSYYTKRIEAINFAMANDDGIRPDNFHRADVVLIGVSRSGKTPTCLYLAMHYGLRSANYPVTEEDFERGDVPQLVWDCRHKLFALTIDPQRLQLIREERRPGSSYASLARCQDDIRMAAQIYKRLQIPVLNTTSQSIEEISSHIIKALRGSGEH.

ADP is bound at residue 152 to 159; sequence GVSRSGKT.

Belongs to the pyruvate, phosphate/water dikinase regulatory protein family. PSRP subfamily.

It catalyses the reaction [pyruvate, water dikinase] + ADP = [pyruvate, water dikinase]-phosphate + AMP + H(+). It carries out the reaction [pyruvate, water dikinase]-phosphate + phosphate + H(+) = [pyruvate, water dikinase] + diphosphate. Bifunctional serine/threonine kinase and phosphorylase involved in the regulation of the phosphoenolpyruvate synthase (PEPS) by catalyzing its phosphorylation/dephosphorylation. The polypeptide is Putative phosphoenolpyruvate synthase regulatory protein (Thiocapsa roseopersicina).